The following is a 766-amino-acid chain: ABC-type oligopeptide transporter ABCB9 (766 aa).

8 helical membrane-spanning segments follow: residues 7-27, 47-67, 84-104, 116-136, 185-205, 225-245, 319-339, and 416-436; these read VVVT…IYVF, VLDL…ATIG, LVIT…LLLF, FWAL…LWWL, VAFL…ETFL, FSTA…AAGI, VFMF…FPII, and SGLT…HLVI. An ABC transmembrane type-1 domain is found at 188–471; the sequence is LVAASFFLIV…VGSVYSGLMQ (284 aa). Residues 504–740 form the ABC transporter domain; it reads VDFENVTFTY…GGLYAKLVQR (237 aa). An ATP-binding site is contributed by 539 to 546; that stretch reads GPSGSGKS.

It belongs to the ABC transporter superfamily. ABCB family. MHC peptide exporter (TC 3.A.1.209) subfamily. As to quaternary structure, homodimer. Interacts (via TMD0 region) with LAMP1; this interaction strongly stabilizes ABCB9 and protects ABCB9 against lysosomal degradation. Interacts (via TMD0 region) with LAMP2 (isoform LAMP-2B). Interacts (via TMD0) with YIF1B; this interaction allows (but is not essential) the ER-to-Golgi trafficking and strongly depends on a salt bridge within TMD0. Highly expressed in testis, and at moderate levels in brain, spinal cord, and thyroid. Not expressed in monocytes but strongly expressed during differentiation of monocytes to dendritic cells and macrophages.

It localises to the lysosome membrane. It carries out the reaction a [oligopeptide](in) + ATP + H2O = a [oligopeptide](out) + ADP + phosphate + H(+). Its activity is regulated as follows. Transport activity is limited by threshold levels of luminal peptide. ATP hydrolysis is reduced in the presence of the spatial challenging 18-mer peptide by 50% and the branched 16-mer peptide by 75%. Transport rate of the longer peptides is strongly reduced. ATP-dependent low-affinity peptide transporter which translocates a broad spectrum of peptides from the cytosol to the lysosomal lumen for degradation. Displays a broad peptide length specificity from 6-mer up to at least 59-mer peptides with an optimum of 23-mers. Binds and transports smaller and larger peptides with the same affinity. Favors positively charged, aromatic or hydrophobic residues in the N- and C-terminal positions whereas negatively charged residues as well as asparagine and methionine are not favored. In Homo sapiens (Human), this protein is ABC-type oligopeptide transporter ABCB9.